A 233-amino-acid chain; its full sequence is ATP synthase subunit a (233 aa).

7 consecutive transmembrane segments (helical) span residues 29–49 (FKHV…SFIV), 60–80 (LQNI…SITG), 89–109 (VLIV…VPGF), 115–135 (NINT…YIGI), 143–163 (IKHF…LELI), 185–205 (FVLI…IYFL), and 206–226 (FTLA…IYLK).

The protein belongs to the ATPase A chain family. F-type ATPases have 2 components, CF(1) - the catalytic core - and CF(0) - the membrane proton channel. CF(1) has five subunits: alpha(3), beta(3), gamma(1), delta(1), epsilon(1). CF(0) has three main subunits: a(1), b(2) and c(9-12). The alpha and beta chains form an alternating ring which encloses part of the gamma chain. CF(1) is attached to CF(0) by a central stalk formed by the gamma and epsilon chains, while a peripheral stalk is formed by the delta and b chains.

Its subcellular location is the cell inner membrane. In terms of biological role, key component of the proton channel; it plays a direct role in the translocation of protons across the membrane. The chain is ATP synthase subunit a from Oleidesulfovibrio alaskensis (strain ATCC BAA-1058 / DSM 17464 / G20) (Desulfovibrio alaskensis).